Consider the following 313-residue polypeptide: Malate dehydrogenase (313 aa).

NAD(+) is bound by residues 11 to 16 (GAGNIG) and D35. Substrate is bound by residues R86 and R92. Residues N99 and 122-124 (ISN) each bind NAD(+). Substrate-binding residues include N124 and R155. Residue H179 is the Proton acceptor of the active site.

Belongs to the LDH/MDH superfamily. MDH type 3 family.

The catalysed reaction is (S)-malate + NAD(+) = oxaloacetate + NADH + H(+). Catalyzes the reversible oxidation of malate to oxaloacetate. The protein is Malate dehydrogenase of Sorangium cellulosum (strain So ce56) (Polyangium cellulosum (strain So ce56)).